A 234-amino-acid chain; its full sequence is MHERSKPKTTGADQTCLEEEKETRGGLRNGSSSDTGGRERTDRGVSCSRRKNCEGQNLEPIGERDDQSSDDDPLLCDERSTIGRHGNADERPHQELAEGGIRMPGRGWWRGKMGNGVWYDFTRHGRGEDDAEGAENNATQQDADVCSGCKFESPREFRKGHRRCSSSTSGILLDREDGASGVPEVSFKERMEAEKKKLKELDDKIYKLRRRLRKMEYKKMGINREIDKLEDSVQ.

Residues 1–103 (MHERSKPKTT…QELAEGGIRM (103 aa)) form a disordered region. Basic and acidic residues predominate over residues 76-96 (CDERSTIGRHGNADERPHQEL). Residues 183–234 (PEVSFKERMEAEKKKLKELDDKIYKLRRRLRKMEYKKMGINREIDKLEDSVQ) are a coiled coil.

In terms of assembly, interacts with host HSC70.

The protein localises to the virion. It localises to the host cytoplasm. It is found in the host nucleus. Functionally, may play a role in virus replication, from virus entry and uncoating to assembly and budding of the virus particle. Interaction of viral NEP with M1-Hsc70 is thought to promote nuclear export of the viral encapsidated genomes. The polypeptide is Matrix protein 1 (Infectious salmon anemia virus (isolate Atlantic salmon/Norway/810/9/99) (ISAV)).